A 563-amino-acid chain; its full sequence is Proton channel OTOP2 (563 aa).

The segment at 1-20 (MSEELVPHPNESLPGPRASP) is disordered. Transmembrane regions (helical) follow at residues 30 to 50 (LLSV…ISGG), 62 to 82 (VFAL…FYLL), 100 to 120 (PIWL…MDVF), 137 to 157 (ILHP…LWIS), 173 to 193 (LMFT…DESV), 242 to 262 (FYLY…LYVM), 290 to 310 (FFAG…VFIL), 325 to 345 (ALVI…LVSL), 373 to 393 (LMGA…AVVV), 403 to 423 (LNLS…VFII), 496 to 516 (DISL…AFGA), and 528 to 548 (FYGY…GIFY).

It belongs to the otopetrin family. As to expression, expressed at higher level in stomach, testis and olfactory bulb.

It localises to the cell membrane. It catalyses the reaction H(+)(in) = H(+)(out). Actives at neutral and alkaline extracellular pH, acid extracellular pH appears to inhibit the channel. Insensitive to activation by Zn(2+). Proton-selective ion channel open at neutral pH. Actives at neutral and alkaline extracellular pH, likely participates in some alkali-related physiological activities. The protein is Proton channel OTOP2 of Mus musculus (Mouse).